Consider the following 1464-residue polypeptide: Alpha-glucan water dikinase, chloroplastic (1464 aa).

The transit peptide at 1 to 77 (MSNSLGNNLL…KRAFSSSPHA (77 aa)) directs the protein to the chloroplast. His-1069 acts as the Tele-phosphohistidine intermediate in catalysis.

Belongs to the PEP-utilizing enzyme family. Homodimer. Mg(2+) is required as a cofactor. Expressed in leaves.

Its subcellular location is the plastid. It localises to the chloroplast. It carries out the reaction [(1-&gt;4)-alpha-D-glucosyl](n) + n ATP + n H2O = [(1-&gt;4)-6-phospho-alpha-D-glucosyl](n) + n AMP + n phosphate + 2n H(+). It catalyses the reaction ATP + protein L-histidine = ADP + protein N-phospho-L-histidine.. Mediates the incorporation of phosphate into starch-like alpha-glucan, mostly at the C-6 position of glucose units. Acts as an overall regulator of starch mobilization. Required for starch degradation, suggesting that the phosphate content of starch regulates its degradability. More active on alpha-1,6 branched amylopectin. This chain is Alpha-glucan water dikinase, chloroplastic (R1), found in Solanum tuberosum (Potato).